The following is a 624-amino-acid chain: tRNA uridine 5-carboxymethylaminomethyl modification enzyme MnmG (624 aa).

FAD contacts are provided by residues 13-18 (GGGHAG), valine 125, and serine 180. 273–287 (GPRYCPSIEDKIVRF) provides a ligand contact to NAD(+). Glutamine 370 lines the FAD pocket.

The protein belongs to the MnmG family. Homodimer. Heterotetramer of two MnmE and two MnmG subunits. The cofactor is FAD.

It localises to the cytoplasm. Its function is as follows. NAD-binding protein involved in the addition of a carboxymethylaminomethyl (cmnm) group at the wobble position (U34) of certain tRNAs, forming tRNA-cmnm(5)s(2)U34. The protein is tRNA uridine 5-carboxymethylaminomethyl modification enzyme MnmG of Legionella pneumophila (strain Lens).